A 225-amino-acid chain; its full sequence is Insulin-induced gene 2 protein (225 aa).

Residues 1–28 (MAEGETESPRPKKCGPYISSVTSQSVNV) lie on the Cytoplasmic side of the membrane. Residues 29-51 (VIRGVVLFFIGVFLALVLNLLQI) form a helical membrane-spanning segment. Topologically, residues 52–70 (QRNVTLFPPDVITSIFSSA) are lumenal. The chain crosses the membrane as a helical span at residues 71–88 (WWVPPCCGTASAVIGLLY). Topologically, residues 89-103 (PCIDRHLGEPHKFKR) are cytoplasmic. The helical transmembrane segment at 104–126 (EWSSVMRCVAVFVGINHASAKVD) threads the bilayer. At 127–129 (FDN) the chain is on the lumenal side. The chain crosses the membrane as a helical span at residues 130 to 148 (NFQFSLTLAALSVGLWWTF). Residues 149–153 (DRSRS) lie on the Cytoplasmic side of the membrane. Phosphoserine is present on S151. A helical membrane pass occupies residues 154-175 (GFGLGVGIAFLATVVTQLLVYN). Residues 176 to 189 (GVYQYTSPDFLYVR) are Lumenal-facing. The chain crosses the membrane as a helical span at residues 190–207 (SWLPCIFFAGGITMGNIG). The Cytoplasmic segment spans residues 208–225 (RQLAMYECKVIAEKSHQE). Cysteine sulfenic acid (-SOH); alternate is present on C215. A Glycyl cysteine thioester (Cys-Gly) (interchain with G-Cter in ubiquitin); alternate cross-link involves residue C215. The KxHxx motif lies at 219-225 (AEKSHQE).

This sequence belongs to the INSIG family. In terms of assembly, interacts with SCAP; interaction is direct and only takes place in the presence of sterols; it prevents interaction between SCAP and the coat protein complex II (COPII). Associates with the SCAP-SREBP complex (composed of SCAP and SREBF1/SREBP1 or SREBF2/SREBP2); association is mediated via its interaction with SCAP and only takes place in the presence of sterols. Interacts with RNF139. Interacts with RNF145. Post-translationally, phosphorylation at Ser-151 by PCK1 reduces binding to oxysterol, disrupting the interaction between INSIG2 and SCAP, thereby promoting nuclear translocation of SREBP proteins (SREBF1/SREBP1 or SREBF2/SREBP2) and subsequent transcription of downstream lipogenesis-related genes. Polyubiquitinated by AMFR/gp78 at Cys-215 in some tissues such as adipose tissues, undifferentiated myoblasts and liver, leading to its degradation. In differentiated myotubes, Cys-215 oxidation prevents ubiquitination at the same site, resulting in protein stabilization. In terms of processing, oxidized at Cys-215 in differentiated myotubes, preventing ubiquitination at the same site, and resulting in protein stabilization. In terms of tissue distribution, expressed in liver, testis, kidney, spleen, intestine, brain and adrenal gland.

The protein resides in the endoplasmic reticulum membrane. Oxysterol-binding protein that mediates feedback control of cholesterol synthesis by controlling both endoplasmic reticulum to Golgi transport of SCAP and degradation of HMGCR. Acts as a negative regulator of cholesterol biosynthesis by mediating the retention of the SCAP-SREBP complex in the endoplasmic reticulum, thereby blocking the processing of sterol regulatory element-binding proteins (SREBPs) SREBF1/SREBP1 and SREBF2/SREBP2. Binds oxysterol, including 22-hydroxycholesterol, 24-hydroxycholesterol, 25-hydroxycholesterol and 27-hydroxycholesterol, regulating interaction with SCAP and retention of the SCAP-SREBP complex in the endoplasmic reticulum. In presence of oxysterol, interacts with SCAP, retaining the SCAP-SREBP complex in the endoplasmic reticulum, thereby preventing SCAP from escorting SREBF1/SREBP1 and SREBF2/SREBP2 to the Golgi. Sterol deprivation or phosphorylation by PCK1 reduce oxysterol-binding, disrupting the interaction between INSIG2 and SCAP, thereby promoting Golgi transport of the SCAP-SREBP complex, followed by processing and nuclear translocation of SREBF1/SREBP1 and SREBF2/SREBP2. Also regulates cholesterol synthesis by regulating degradation of HMGCR: initiates the sterol-mediated ubiquitin-mediated endoplasmic reticulum-associated degradation (ERAD) of HMGCR via recruitment of the reductase to the ubiquitin ligase RNF139. The sequence is that of Insulin-induced gene 2 protein from Mus musculus (Mouse).